Here is a 270-residue protein sequence, read N- to C-terminus: Imidazole glycerol phosphate synthase subunit HisF (270 aa).

Catalysis depends on residues Asp11 and Asp130.

Belongs to the HisA/HisF family. Heterodimer of HisH and HisF.

The protein localises to the cytoplasm. The enzyme catalyses 5-[(5-phospho-1-deoxy-D-ribulos-1-ylimino)methylamino]-1-(5-phospho-beta-D-ribosyl)imidazole-4-carboxamide + L-glutamine = D-erythro-1-(imidazol-4-yl)glycerol 3-phosphate + 5-amino-1-(5-phospho-beta-D-ribosyl)imidazole-4-carboxamide + L-glutamate + H(+). It participates in amino-acid biosynthesis; L-histidine biosynthesis; L-histidine from 5-phospho-alpha-D-ribose 1-diphosphate: step 5/9. In terms of biological role, IGPS catalyzes the conversion of PRFAR and glutamine to IGP, AICAR and glutamate. The HisF subunit catalyzes the cyclization activity that produces IGP and AICAR from PRFAR using the ammonia provided by the HisH subunit. In Sorangium cellulosum (strain So ce56) (Polyangium cellulosum (strain So ce56)), this protein is Imidazole glycerol phosphate synthase subunit HisF.